Here is a 333-residue protein sequence, read N- to C-terminus: Transcription factor HHO6 (333 aa).

An HTH myb-type domain is found at alanine 189–arginine 249. The H-T-H motif DNA-binding region spans proline 220–arginine 245. Positions aspartate 274–proline 333 are disordered. Residues arginine 287–serine 303 show a composition bias toward polar residues. The segment covering aspartate 319–proline 333 has biased composition (basic and acidic residues).

Its subcellular location is the nucleus. Functionally, probable transcription factor involved in phosphate signaling in roots. This chain is Transcription factor HHO6, found in Arabidopsis thaliana (Mouse-ear cress).